The following is a 245-amino-acid chain: tRNA (guanine-N(1)-)-methyltransferase (245 aa).

S-adenosyl-L-methionine contacts are provided by residues G112 and 132–137 (IGDFVL).

It belongs to the RNA methyltransferase TrmD family. As to quaternary structure, homodimer.

It is found in the cytoplasm. It carries out the reaction guanosine(37) in tRNA + S-adenosyl-L-methionine = N(1)-methylguanosine(37) in tRNA + S-adenosyl-L-homocysteine + H(+). Specifically methylates guanosine-37 in various tRNAs. The sequence is that of tRNA (guanine-N(1)-)-methyltransferase from Geobacter metallireducens (strain ATCC 53774 / DSM 7210 / GS-15).